We begin with the raw amino-acid sequence, 1138 residues long: Protein RECOGNITION OF PERONOSPORA PARASITICA 7 (1138 aa).

Positions Glu166–Glu422 constitute an NB-ARC domain. Gly189–Thr196 lines the ATP pocket. 19 LRR repeats span residues Gln544–Val565, Val566–Leu581, Glu582–Leu606, Ile607–Leu631, Met655–Lys680, Leu681–Thr705, Thr707–Leu726, Lys727–Phe752, His754–Pro774, Ser775–Lys797, Leu798–Gln825, Met847–Ser871, Leu873–Leu893, Val894–Gln918, Met940–Gln963, Leu1028–Cys1050, Phe1055–Met1078, Pro1079–Tyr1103, and Lys1115–Asp1138.

It belongs to the disease resistance NB-LRR family.

Disease resistance protein required for incompatible interactions with avirulent strains of Hyaloperonospora arabidopsidis (downy mildew), isolate Hpa-Hiks1 in cv. Columbia. This is Protein RECOGNITION OF PERONOSPORA PARASITICA 7 from Arabidopsis thaliana (Mouse-ear cress).